Here is a 365-residue protein sequence, read N- to C-terminus: MKQVHFFILWFFVLNLYSIKAQAGCRTPNGENARCVPINNCKILYDSVLTSDPEVIRFLRASQCGYNGQPLVCCGSSASYQPPPTSASIRNRRPELLPNDCGYQVEADKILNGDDTVPEEFPWTAMIGYKNSSNFEQFACGGSLINNRYIVTAAHCVAGRVLRVVGALNKVRLGEWNTATDPDCYGAVRVCVPDKPIDLGIEETIQHPDYVDGSKDRYHDIALIRLNRQVEFTNYIRPVCLPQPNEEVQVGQRLTVVGWGRTETGQYSTIKQKLAVPVVHAEQCAKTFGAAGVRVRSSQLCAGGEKAKDSCGGDSGGPLLAERANQQFFLEGLVSFGATCGTEGWPGIYTKVGKYRDWIEGNIRP.

The first 23 residues, 1–23 (MKQVHFFILWFFVLNLYSIKAQA), serve as a signal peptide directing secretion. The 51-residue stretch at 24-74 (GCRTPNGENARCVPINNCKILYDSVLTSDPEVIRFLRASQCGYNGQPLVCC) folds into the Clip domain. Cystine bridges form between Cys25–Cys73, Cys35–Cys64, Cys41–Cys74, Cys101–Cys240, Cys140–Cys156, Cys184–Cys191, Cys284–Cys301, and Cys311–Cys340. Residues 110–364 (ILNGDDTVPE…YRDWIEGNIR (255 aa)) form the Peptidase S1 domain. The N-linked (GlcNAc...) asparagine glycan is linked to Asn131. The active-site Charge relay system is the His155. Ca(2+)-binding residues include Glu175, Asn177, Thr180, and Asp183. Catalysis depends on Asp220, which acts as the Charge relay system. The Charge relay system role is filled by Ser315.

This sequence belongs to the peptidase S1 family. CLIP subfamily. In terms of assembly, in the active form, heterodimer of a light chain and a heavy chain; disulfide-linked. In terms of processing, cleaved following the recognition of pathogen-derived products, probably by a lysyl endopeptidase.

It localises to the secreted. Its activity is regulated as follows. Protein stability and endopeptidase activity are calcium dependent. First cleavage on prophenoloxidase PPO1 and PPO2 is not dependent on calcium; however, cleavage of PPO1 and PPO2 to their active forms is dependent on calcium and on the presence of PPAF2 and PPAF3. Cleavage of PPAF2 is inhibited by calcium. Inhibited by ethylenediaminetetraacetic acid (EDTA), p-nitrophenyl-p'-guanido-benzoate, diisopropylphosphorofluoridate (iPr2PF) and p-(Amidinophenyl)methanesulfonyl fluoride (p-APMSF). In terms of biological role, serine endopeptidase which, by cleaving prophenoloxidase PPO1 and PPO2, is required for the activation of the prophenoloxidase cascade probably following the recognition of pathogen-derived products. In Holotrichia diomphalia (Korean black chafer), this protein is Phenoloxidase-activating factor 1.